Reading from the N-terminus, the 742-residue chain is Photosystem I P700 chlorophyll a apoprotein A2 (742 aa).

8 helical membrane passes run 46 to 69, 135 to 158, 175 to 199, 273 to 291, 336 to 359, 375 to 401, 423 to 445, and 525 to 543; these read LFST…FHIA, LFQA…LHLQ, LNHH…HVAI, IAHH…GHMY, LHFQ…QHMG, SALY…IFFV, ALIS…IYVH, and FLVH…LILI. Residues C567 and C576 each coordinate [4Fe-4S] cluster. A run of 2 helical transmembrane segments spans residues 583–604 and 651–673; these read AMYL…YWHW and LSPW…MFLI. The divinyl chlorophyll a site is built by H662, M670, and Y678. W679 provides a ligand contact to phylloquinone. Residues 715–735 form a helical membrane-spanning segment; it reads LVGLAHFTIGNILTFGAFVIA.

This sequence belongs to the PsaA/PsaB family. As to quaternary structure, the PsaA/B heterodimer binds the P700 divinyl chlorophyll special pair and subsequent electron acceptors. PSI consists of a core antenna complex that captures photons, and an electron transfer chain that converts photonic excitation into a charge separation. The cyanobacterial PSI reaction center is composed of one copy each of PsaA,B,C,D,E,F,I,J,K,L,M and X, and forms trimeric complexes. The cofactor is PSI electron transfer chain: 5 divinyl chlorophyll a, 1 divinyl chlorophyll a', 2 phylloquinones and 3 4Fe-4S clusters. PSI core antenna: 90 divinyl chlorophyll a, 22 carotenoids, 3 phospholipids and 1 galactolipid. P700 is a divinyl chlorophyll a/divinyl chlorophyll a' dimer, A0 is one or more divinyl chlorophyll a, A1 is one or both phylloquinones and FX is a shared 4Fe-4S iron-sulfur center..

It localises to the cellular thylakoid membrane. It catalyses the reaction reduced [plastocyanin] + hnu + oxidized [2Fe-2S]-[ferredoxin] = oxidized [plastocyanin] + reduced [2Fe-2S]-[ferredoxin]. In terms of biological role, psaA and PsaB bind P700, the primary electron donor of photosystem I (PSI), as well as the electron acceptors A0, A1 and FX. PSI is a plastocyanin/cytochrome c6-ferredoxin oxidoreductase, converting photonic excitation into a charge separation, which transfers an electron from the donor P700 chlorophyll pair to the spectroscopically characterized acceptors A0, A1, FX, FA and FB in turn. Oxidized P700 is reduced on the lumenal side of the thylakoid membrane by plastocyanin or cytochrome c6. This Prochlorococcus marinus (strain MIT 9301) protein is Photosystem I P700 chlorophyll a apoprotein A2.